We begin with the raw amino-acid sequence, 60 residues long: Small ribosomal subunit protein eS31 (60 aa).

Zn(2+) contacts are provided by C24, C27, C42, and C45. A C4-type zinc finger spans residues 24-45 (CPRCGPGVFMADHGNRYACGRC).

This sequence belongs to the eukaryotic ribosomal protein eS31 family. As to quaternary structure, part of the 30S ribosomal subunit. It depends on Zn(2+) as a cofactor.

This is Small ribosomal subunit protein eS31 from Methanopyrus kandleri (strain AV19 / DSM 6324 / JCM 9639 / NBRC 100938).